We begin with the raw amino-acid sequence, 400 residues long: Cytochrome P450 BJ-1 homolog (400 aa).

Cys349 provides a ligand contact to heme.

The protein belongs to the cytochrome P450 family. The cofactor is heme.

In terms of biological role, cytochromes P450 are a group of heme-thiolate monooxygenases. They oxidize a variety of structurally unrelated compounds, including steroids, fatty acids, and xenobiotics. The chain is Cytochrome P450 BJ-1 homolog (cyp112A2) from Sinorhizobium fredii (strain NBRC 101917 / NGR234).